Here is a 538-residue protein sequence, read N- to C-terminus: C-22 sterol desaturase ERG5 (538 aa).

A helical transmembrane segment spans residues 46–66 (LKIFATLICILLVWDQVAYQI). Residues K164 and K198 each participate in a glycyl lysine isopeptide (Lys-Gly) (interchain with G-Cter in ubiquitin) cross-link. C476 is a heme binding site.

It belongs to the cytochrome P450 family. Interacts with ERG28. Requires heme as cofactor.

It is found in the endoplasmic reticulum membrane. It catalyses the reaction 5-dehydroepisterol + NADPH + O2 + H(+) = ergosta-5,7,22,24(28)-tetraen-3beta-ol + NADP(+) + 2 H2O. It participates in steroid metabolism; ergosterol biosynthesis; ergosterol from zymosterol: step 4/5. Its function is as follows. C-22 sterol desaturase; part of the third module of ergosterol biosynthesis pathway that includes the late steps of the pathway. ERG5 converts 5-dehydroepisterol into ergosta-5,7,22,24(28)-tetraen-3beta-ol by forming the C-22(23) double bond in the sterol side chain. The third module or late pathway involves the ergosterol synthesis itself through consecutive reactions that mainly occur in the endoplasmic reticulum (ER) membrane. Firstly, the squalene synthase ERG9 catalyzes the condensation of 2 farnesyl pyrophosphate moieties to form squalene, which is the precursor of all steroids. Squalene synthase is crucial for balancing the incorporation of farnesyl diphosphate (FPP) into sterol and nonsterol isoprene synthesis. Secondly, the squalene epoxidase ERG1 catalyzes the stereospecific oxidation of squalene to (S)-2,3-epoxysqualene, which is considered to be a rate-limiting enzyme in steroid biosynthesis. Then, the lanosterol synthase ERG7 catalyzes the cyclization of (S)-2,3 oxidosqualene to lanosterol, a reaction that forms the sterol core. In the next steps, lanosterol is transformed to zymosterol through a complex process involving various demethylation, reduction and desaturation reactions. The lanosterol 14-alpha-demethylase ERG11 (also known as CYP51) catalyzes C14-demethylation of lanosterol to produce 4,4'-dimethyl cholesta-8,14,24-triene-3-beta-ol, which is critical for ergosterol biosynthesis. The C-14 reductase ERG24 reduces the C14=C15 double bond of 4,4-dimethyl-cholesta-8,14,24-trienol to produce 4,4-dimethyl-cholesta-8,24-dienol. 4,4-dimethyl-cholesta-8,24-dienol is substrate of the C-4 demethylation complex ERG25-ERG26-ERG27 in which ERG25 catalyzes the three-step monooxygenation required for the demethylation of 4,4-dimethyl and 4alpha-methylsterols, ERG26 catalyzes the oxidative decarboxylation that results in a reduction of the 3-beta-hydroxy group at the C-3 carbon to an oxo group, and ERG27 is responsible for the reduction of the keto group on the C-3. ERG28 has a role as a scaffold to help anchor ERG25, ERG26 and ERG27 to the endoplasmic reticulum and ERG29 regulates the activity of the iron-containing C4-methylsterol oxidase ERG25. Then, the sterol 24-C-methyltransferase ERG6 catalyzes the methyl transfer from S-adenosyl-methionine to the C-24 of zymosterol to form fecosterol. The C-8 sterol isomerase ERG2 catalyzes the reaction which results in unsaturation at C-7 in the B ring of sterols and thus converts fecosterol to episterol. The sterol-C5-desaturase ERG3 then catalyzes the introduction of a C-5 double bond in the B ring to produce 5-dehydroepisterol. The C-22 sterol desaturase ERG5 further converts 5-dehydroepisterol into ergosta-5,7,22,24(28)-tetraen-3beta-ol by forming the C-22(23) double bond in the sterol side chain. Finally, ergosta-5,7,22,24(28)-tetraen-3beta-ol is substrate of the C-24(28) sterol reductase ERG4 to produce ergosterol. The chain is C-22 sterol desaturase ERG5 from Saccharomyces cerevisiae (strain ATCC 204508 / S288c) (Baker's yeast).